A 350-amino-acid chain; its full sequence is ALA-interacting subunit 5 (350 aa).

Positions 1–23 (MSSTAASSTVGGGGSSEISGVKK) are disordered. S2 is subject to N-acetylserine. A helical transmembrane segment spans residues 50-70 (VILTFLVAGVVFIPLGVICLF). 2 N-linked (GlcNAc...) asparagine glycosylation sites follow: N181 and N231. The helical transmembrane segment at 304–324 (FLGIAYLTVGSICLFLAVTFA) threads the bilayer.

The protein belongs to the CDC50/LEM3 family. Interacts with ALA2 and ALA3 in a heterologous system. In terms of tissue distribution, expressed in roots, leaves, stems, flowers and siliques.

The protein localises to the golgi apparatus membrane. It is found in the prevacuolar compartment membrane. It localises to the endoplasmic reticulum membrane. In terms of biological role, required for the lipid transport activity of the ALA/ALIS P4-ATPase complex. This Arabidopsis thaliana (Mouse-ear cress) protein is ALA-interacting subunit 5 (ALIS5).